The sequence spans 791 residues: Organellar oligopeptidase A, chloroplastic/mitochondrial (791 aa).

The N-terminal 82 residues, 1-82 (MLMATPTSRA…SSPPSMSSAA (82 aa)), are a transit peptide targeting the chloroplast and mitochondrion. Coiled coils occupy residues 118–138 (RPGI…LEKS) and 239–259 (DDEK…LSHK). Histidine 571 lines the Zn(2+) pocket. Glutamate 572 is an active-site residue. Positions 575 and 601 each coordinate Zn(2+). 703-709 (HIFAGGY) lines the substrate pocket.

The protein belongs to the peptidase M3 family. It depends on Zn(2+) as a cofactor.

It is found in the mitochondrion matrix. The protein resides in the plastid. Its subcellular location is the chloroplast stroma. The catalysed reaction is Hydrolysis of oligopeptides, with broad specificity. Gly or Ala commonly occur as P1 or P1' residues, but more distant residues are also important, as is shown by the fact that Z-Gly-Pro-Gly-|-Gly-Pro-Ala is cleaved, but not Z-(Gly)(5).. With respect to regulation, inhibited by salicylic acid. Functionally, oligopeptidase degrading short peptides from 8 to 23 amino acid residues. Plays a role in the degradation of transit peptides and of peptides derived from other proteolytic events. Does not exhibit a strict cleavage pattern. Binds salicylic acid. This Arabidopsis thaliana (Mouse-ear cress) protein is Organellar oligopeptidase A, chloroplastic/mitochondrial.